The sequence spans 466 residues: Soluble pyridine nucleotide transhydrogenase (466 aa).

Residue 36–45 (ERYHNVGGGC) coordinates FAD.

This sequence belongs to the class-I pyridine nucleotide-disulfide oxidoreductase family. FAD is required as a cofactor.

Its subcellular location is the cytoplasm. The enzyme catalyses NAD(+) + NADPH = NADH + NADP(+). Conversion of NADPH, generated by peripheral catabolic pathways, to NADH, which can enter the respiratory chain for energy generation. The chain is Soluble pyridine nucleotide transhydrogenase from Enterobacter sp. (strain 638).